Here is a 95-residue protein sequence, read N- to C-terminus: Basic phospholipase A2 (95 aa).

Residues Lys7 and Lys10 are each lipidated (N6-palmitoyl lysine). Residues Tyr23, Gly25, and Gly27 each contribute to the Ca(2+) site. 5 cysteine pairs are disulfide-bonded: Cys24/Cys40, Cys39/Cys77, Cys46/Cys70, Cys53/Cys63, and Cys57/Cys68. His43 is an active-site residue. Asp44 is a binding site for Ca(2+). Residue Asp71 is part of the active site.

Monomer. It depends on Ca(2+) as a cofactor. In terms of tissue distribution, expressed by the venom gland.

The protein localises to the secreted. It carries out the reaction a 1,2-diacyl-sn-glycero-3-phosphocholine + H2O = a 1-acyl-sn-glycero-3-phosphocholine + a fatty acid + H(+). Its function is as follows. PLA2 catalyzes the calcium-dependent hydrolysis of the 2-acyl groups in 3-sn-phosphoglycerides. Induces local and systemic myotoxicity in an intramuscular mouse model. Induces local edema in a mouse footpad assay. Does not exhibit any anticoagulant effects. Does not mediate an antibacterial effect against Gram-negative and Gram-positive bacteria. The chain is Basic phospholipase A2 from Agkistrodon piscivorus leucostoma (Western cottonmouth).